We begin with the raw amino-acid sequence, 169 residues long: uncharacterized protein (169 aa).

The signal sequence occupies residues 1–21 (MVPVARASLFTLACLLVSVCA).

As to expression, component of the acid-soluble and acid-insoluble organic matrix of calcified shell layers (at protein level).

It is found in the secreted. This is an uncharacterized protein from Haliotis asinina (Donkey's ear abalone).